A 326-amino-acid polypeptide reads, in one-letter code: Thioredoxin reductase (326 aa).

Glu55–Gln62 provides a ligand contact to FAD. Cys156 and Cys159 are joined by a disulfide. Asp298–Ala307 contributes to the FAD binding site.

It belongs to the class-II pyridine nucleotide-disulfide oxidoreductase family. In terms of assembly, homodimer. The cofactor is FAD.

The protein localises to the cytoplasm. The catalysed reaction is [thioredoxin]-dithiol + NADP(+) = [thioredoxin]-disulfide + NADPH + H(+). In Borreliella burgdorferi (strain ATCC 35210 / DSM 4680 / CIP 102532 / B31) (Borrelia burgdorferi), this protein is Thioredoxin reductase (trxB).